Reading from the N-terminus, the 368-residue chain is MSEAENKLPFIPEEWSNAASSVSCSSLQPVIALVCGPKNSGKSTFSRNLVEVLLQRYKRVAYLDTDVGQPEFTAPGFLSLTIVDKSILESDWTVPCVKTPERCFFYGDVSSKRDPKAYLRYVYTLFDYYQLHFCKSSENKTELPLVINTPGWVKGIGYELLVDVLRYVSPSHVVKINISAYNKNLPAGLFWLDGNDDETAHLIEIQSAYQDRYNQSILIHKDARLMRDMRIIAYFRQCFKGKEVNTIKELTHELASHIPYEVPISSLTINHLHCQIPSSEVYYSLNASIVGLGISTEVFEDLPSCVGLGIVRGIDTERGILYVITPVPENLVEKVDLLLQGYIQLPTCLLEVKDYRSPYLSANVLAST.

36–43 (GPKNSGKS) contributes to the ATP binding site.

Belongs to the Clp1 family. NOL9/GRC3 subfamily.

It is found in the nucleus. The protein localises to the nucleolus. In terms of biological role, polynucleotide 5'-kinase involved in rRNA processing. The sequence is that of Polynucleotide 5'-hydroxyl-kinase NOL9 from Arabidopsis thaliana (Mouse-ear cress).